A 371-amino-acid polypeptide reads, in one-letter code: D-erythrose-4-phosphate dehydrogenase (371 aa).

12–13 (RI) is an NAD(+) binding site. Residues 154-156 (SCT), Arg-200, 213-214 (TK), and Arg-236 each bind substrate. Catalysis depends on Cys-155, which acts as the Nucleophile. Asn-318 is an NAD(+) binding site.

It belongs to the glyceraldehyde-3-phosphate dehydrogenase family. Epd subfamily. In terms of assembly, homotetramer.

The protein localises to the cytoplasm. The enzyme catalyses D-erythrose 4-phosphate + NAD(+) + H2O = 4-phospho-D-erythronate + NADH + 2 H(+). It participates in cofactor biosynthesis; pyridoxine 5'-phosphate biosynthesis; pyridoxine 5'-phosphate from D-erythrose 4-phosphate: step 1/5. Catalyzes the NAD-dependent conversion of D-erythrose 4-phosphate to 4-phosphoerythronate. In Psychromonas ingrahamii (strain DSM 17664 / CCUG 51855 / 37), this protein is D-erythrose-4-phosphate dehydrogenase.